The primary structure comprises 496 residues: Myotilin (496 aa).

Positions 1 to 37 (MFNYERPKHFIQPQNPCGSRLQPPGPEVSGFPSQTKQ) are disordered. Position 20 is an omega-N-methylarginine (arginine 20). A necessary for interaction with ACTN1 region spans residues 78–149 (PNPGQKVTAT…PTPKTPDHEI (72 aa)). Polar residues-rich tracts occupy residues 202–213 (NSDVQDSPQHNP) and 221–233 (PTSQ…SSRA). The segment at 202–239 (NSDVQDSPQHNPEQARLHVPTSQVRSRSSSRAEANDQD) is disordered. A necessary for interaction with FLNC region spans residues 213–491 (PEQARLHVPT…QRLAAQSGLY (279 aa)). The tract at residues 213–496 (PEQARLHVPT…QSGLYESEEL (284 aa)) is necessary for interaction with ACTA1. 2 Ig-like C2-type domains span residues 248–333 (PRFI…ATFT) and 347–439 (PMFI…LDVT).

Belongs to the myotilin/palladin family. In terms of assembly, homodimer. Interacts with ACTA1, ACTN1, FLNA, FLNB, FLNC, and MYOZ2. Interacts with the C-terminal region of MYOZ1. As to expression, expressed in skeletal muscle (at protein level).

It localises to the cell membrane. It is found in the sarcolemma. The protein localises to the cytoplasm. The protein resides in the cytoskeleton. Its subcellular location is the myofibril. It localises to the sarcomere. It is found in the z line. Functionally, component of a complex of multiple actin cross-linking proteins. Involved in the control of myofibril assembly and stability at the Z lines in muscle cells. This is Myotilin (Myot) from Mus musculus (Mouse).